Reading from the N-terminus, the 191-residue chain is Methylated-DNA--protein-cysteine methyltransferase (191 aa).

Y120 and R134 together coordinate DNA. The active-site Nucleophile; methyl group acceptor is the C151.

The protein belongs to the MGMT family.

The protein localises to the nucleus. It carries out the reaction a 6-O-methyl-2'-deoxyguanosine in DNA + L-cysteinyl-[protein] = S-methyl-L-cysteinyl-[protein] + a 2'-deoxyguanosine in DNA. The enzyme catalyses a 4-O-methyl-thymidine in DNA + L-cysteinyl-[protein] = a thymidine in DNA + S-methyl-L-cysteinyl-[protein]. Functionally, involved in the cellular defense against the biological effects of O6-methylguanine (O6-MeG) and O4-methylthymine (O4-MeT) in DNA. Repairs the methylated nucleobase in DNA by stoichiometrically transferring the methyl group to a cysteine residue in the enzyme. This is a suicide reaction: the enzyme is irreversibly inactivated. This chain is Methylated-DNA--protein-cysteine methyltransferase (MGT1), found in Debaryomyces hansenii (strain ATCC 36239 / CBS 767 / BCRC 21394 / JCM 1990 / NBRC 0083 / IGC 2968) (Yeast).